The sequence spans 647 residues: RalBP1-associated Eps domain-containing protein 2 (647 aa).

An EH 1 domain is found at 21-122; it reads EQQCYSELFA…RTESIKCELP (102 aa). Residues 156-233 form a disordered region; the sequence is EKNSFKRMDN…PSSEGPGAKP (78 aa). Basic and acidic residues predominate over residues 158–170; sequence NSFKRMDNEDKQE. Residues 221–230 show a composition bias toward low complexity; sequence PEGPSSEGPG. The residue at position 239 (Ser-239) is a Phosphoserine. Residues 268–359 form the EH 2 domain; that stretch reads QREYYVNQFR…LQPEYLQAAF (92 aa). The EF-hand domain occupies 301 to 336; the sequence is LSIPELSYIWELSDADCDGALTLSEFCAAFHLIVAR. The Ca(2+) site is built by Asp-314, Asp-316, Asp-318, and Glu-325. The tract at residues 402-478 is disordered; it reads PTQDVTTADD…PRPQKTHSRA (77 aa). A Phosphothreonine modification is found at Thr-466. A Phosphoserine modification is found at Ser-480. The interval 492–568 is disordered; sequence PAANSGLLPP…PENQTTESQE (77 aa). Positions 499–510 are enriched in pro residues; that stretch reads LPPPPALPPRPC. Residues 501–647 are interaction with RALBP1; the sequence is PPPALPPRPC…LEQLRPVTVL (147 aa). Residues 524-539 are compositionally biased toward polar residues; that stretch reads SQLNRAPSQAAESSPT. The segment at 548–647 is interaction with ASAP1; sequence PPSKPIRRKF…LEQLRPVTVL (100 aa). Residues 599 to 640 adopt a coiled-coil conformation; it reads IQTAIRKNKEANAVLARLNSELQQQLKEVHQERIALENQLEQ.

Interacts with EPN1. Interacts with EPS15 AND EPS15L1. Interacts with RALBP1; can form a ternary complex with activated Ral (RALA or RALB). Interacts with ASAP1; the interaction is direct and this complex can bind paxillin. Also forms a ternary complex with RALBP1 and ASAP1. Interacts with GRB2. In terms of processing, tyrosine-phosphorylated upon stimulation of cells with EGF. Phosphorylation on Tyr-residues induces its association with the EGF receptor probably indirectly through an adapter like GRB2.

The protein resides in the cytoplasm. Functionally, involved in ligand-dependent receptor mediated endocytosis of the EGF and insulin receptors as part of the Ral signaling pathway. By controlling growth factor receptors endocytosis may regulate cell survival. Through ASAP1 may regulate cell adhesion and migration. This Mus musculus (Mouse) protein is RalBP1-associated Eps domain-containing protein 2 (Reps2).